Reading from the N-terminus, the 204-residue chain is Proteasome subunit beta type-3 (204 aa).

It belongs to the peptidase T1B family. As to quaternary structure, the 26S proteasome consists of a 20S proteasome core and two 19S regulatory subunits. The 20S proteasome core is composed of 28 subunits that are arranged in four stacked rings, resulting in a barrel-shaped structure. The two end rings are each formed by seven alpha subunits, and the two central rings are each formed by seven beta subunits. The catalytic chamber with the active sites is on the inside of the barrel.

The protein localises to the cytoplasm. It is found in the nucleus. Functionally, non-catalytic component of the proteasome, a multicatalytic proteinase complex which is characterized by its ability to cleave peptides with Arg, Phe, Tyr, Leu, and Glu adjacent to the leaving group at neutral or slightly basic pH. The proteasome has an ATP-dependent proteolytic activity. This Caenorhabditis elegans protein is Proteasome subunit beta type-3 (pbs-3).